The chain runs to 77 residues: Translation initiation factor IF-1, chloroplastic (77 aa).

Residues 1 to 71 enclose the S1-like domain; sequence MKEQKLIHEG…TRGRIIYRLR (71 aa).

It belongs to the IF-1 family. Component of the 30S ribosomal translation pre-initiation complex which assembles on the 30S ribosome in the order IF-2 and IF-3, IF-1 and N-formylmethionyl-tRNA(fMet); mRNA recruitment can occur at any time during PIC assembly.

The protein resides in the plastid. It is found in the chloroplast. Functionally, one of the essential components for the initiation of protein synthesis. Stabilizes the binding of IF-2 and IF-3 on the 30S subunit to which N-formylmethionyl-tRNA(fMet) subsequently binds. Helps modulate mRNA selection, yielding the 30S pre-initiation complex (PIC). Upon addition of the 50S ribosomal subunit IF-1, IF-2 and IF-3 are released leaving the mature 70S translation initiation complex. The sequence is that of Translation initiation factor IF-1, chloroplastic from Acorus calamus var. americanus (American sweet flag).